Reading from the N-terminus, the 337-residue chain is WRKY transcription factor 23 (337 aa).

Residues 100–160 form a disordered region; sequence INPPATPNSS…KNNQKRQREA (61 aa). A compositionally biased stretch (low complexity) spans 106-118; the sequence is PNSSSISSASSEA. The span at 142–155 shows a compositional bias: basic residues; that stretch reads HTKKQLKAKKNNQK. Positions 168–233 form a DNA-binding region, WRKY; sequence SEVDHLEDGY…YEGQHTHISP (66 aa).

This sequence belongs to the WRKY group II-c family.

It localises to the nucleus. In terms of biological role, transcription factor. Interacts specifically with the W box (5'-(T)TGAC[CT]-3'), a frequently occurring elicitor-responsive cis-acting element. This Arabidopsis thaliana (Mouse-ear cress) protein is WRKY transcription factor 23 (WRKY23).